The following is a 480-amino-acid chain: 6-phosphogluconate dehydrogenase, decarboxylating 1 (480 aa).

Residues Gly-10–Gly-15, Asn-33–Thr-35, Val-77–Ala-79, and Asn-105 contribute to the NADP(+) site. Substrate is bound by residues Asn-105 and Ser-131 to Gly-133. Lys-186 serves as the catalytic Proton acceptor. His-189–Asn-190 is a binding site for substrate. The Proton donor role is filled by Glu-193. Positions 194, 264, 291, 450, and 456 each coordinate substrate.

The protein belongs to the 6-phosphogluconate dehydrogenase family. Homodimer. In terms of tissue distribution, highly expressed in inflorescence, lowly expressed in root and embryos and almost absent in leaves.

Its subcellular location is the cytoplasm. It catalyses the reaction 6-phospho-D-gluconate + NADP(+) = D-ribulose 5-phosphate + CO2 + NADPH. The protein operates within carbohydrate degradation; pentose phosphate pathway; D-ribulose 5-phosphate from D-glucose 6-phosphate (oxidative stage): step 3/3. Catalyzes the oxidative decarboxylation of 6-phosphogluconate to ribulose 5-phosphate and CO(2), with concomitant reduction of NADP to NADPH. This is 6-phosphogluconate dehydrogenase, decarboxylating 1 (G6PGH1) from Oryza sativa subsp. japonica (Rice).